A 221-amino-acid polypeptide reads, in one-letter code: Stromal cell-derived factor 2-like protein 1 (221 aa).

The first 28 residues, 1–28 (MWSAGSGRAAGPALLGILLALSLSGGRA), serve as a signal peptide directing secretion. 3 consecutive MIR domains span residues 33 to 87 (AGLV…IRGG), 95 to 150 (GSPV…VRCS), and 151 to 205 (GQHW…AMEG). The short motif at 218 to 221 (HDEL) is the Prevents secretion from ER element.

It localises to the endoplasmic reticulum lumen. This is Stromal cell-derived factor 2-like protein 1 (SDF2L1) from Bos taurus (Bovine).